The chain runs to 326 residues: Peroxidase 1 (326 aa).

An N-terminal signal peptide occupies residues Met-1–Ala-22. Gln-23 carries the post-translational modification Pyrrolidone carboxylic acid. 4 disulfides stabilise this stretch: Cys-33/Cys-112, Cys-66/Cys-71, Cys-118/Cys-322, and Cys-196/Cys-231. The Proton acceptor role is filled by His-64. Asp-65, Val-68, Gly-70, Asp-72, and Ser-74 together coordinate Ca(2+). N-linked (GlcNAc...) asparagine glycans are attached at residues Asn-82 and Asn-153. Pro-159 is a binding site for substrate. N-linked (GlcNAc...) asparagine glycosylation is present at Asn-164. His-189 lines the heme b pocket. Thr-190 is a Ca(2+) binding site. Asn-205 and Asn-237 each carry an N-linked (GlcNAc...) asparagine glycan. 3 residues coordinate Ca(2+): Asp-244, Ser-247, and Asp-252.

This sequence belongs to the peroxidase family. Classical plant (class III) peroxidase subfamily. Ca(2+) is required as a cofactor. Heme b serves as cofactor.

The protein resides in the secreted. It carries out the reaction 2 a phenolic donor + H2O2 = 2 a phenolic radical donor + 2 H2O. Removal of H(2)O(2), oxidation of toxic reductants, biosynthesis and degradation of lignin, suberization, auxin catabolism, response to environmental stresses such as wounding, pathogen attack and oxidative stress. These functions might be dependent on each isozyme/isoform in each plant tissue. This Oryza sativa subsp. japonica (Rice) protein is Peroxidase 1 (PRX74).